Reading from the N-terminus, the 679-residue chain is Methionine--tRNA ligase (679 aa).

A 'HIGH' region motif is present at residues 14 to 24 (PYANGSIHLGH). The Zn(2+) site is built by Cys145, Cys148, Cys158, and Cys161. The 'KMSKS' region motif lies at 331–335 (KMSKS). An ATP-binding site is contributed by Lys334. The region spanning 577–679 (TFAAVDLRVA…SGAKPGQRIK (103 aa)) is the tRNA-binding domain.

This sequence belongs to the class-I aminoacyl-tRNA synthetase family. MetG type 1 subfamily. In terms of assembly, homodimer. Requires Zn(2+) as cofactor.

The protein resides in the cytoplasm. The enzyme catalyses tRNA(Met) + L-methionine + ATP = L-methionyl-tRNA(Met) + AMP + diphosphate. Is required not only for elongation of protein synthesis but also for the initiation of all mRNA translation through initiator tRNA(fMet) aminoacylation. The sequence is that of Methionine--tRNA ligase from Pseudomonas putida (strain ATCC 700007 / DSM 6899 / JCM 31910 / BCRC 17059 / LMG 24140 / F1).